The primary structure comprises 143 residues: Sporulation-specific protein 73 (143 aa).

This sequence belongs to the SPO73 family. In terms of assembly, interacts with SPO71.

The protein localises to the cytoplasm. Its subcellular location is the prospore membrane. Its function is as follows. Required for spore wall assembly and ascus formation. Involved in the formation and elongation of prospore membranes. This chain is Sporulation-specific protein 73, found in Saccharomyces cerevisiae (strain ATCC 204508 / S288c) (Baker's yeast).